A 488-amino-acid polypeptide reads, in one-letter code: Sterol 14-demethylase (488 aa).

A helical transmembrane segment spans residues Thr12–Ser32. Residue Cys433 coordinates heme.

It belongs to the cytochrome P450 family. Heme is required as a cofactor. Expressed in leaves, roots, stems, siliques, flowers, flower buds and seedlings.

It is found in the membrane. The catalysed reaction is a 14alpha-methyl steroid + 3 reduced [NADPH--hemoprotein reductase] + 3 O2 = a Delta(14) steroid + formate + 3 oxidized [NADPH--hemoprotein reductase] + 4 H2O + 4 H(+). Functionally, involved in sterol biosynthesis. Catalyzes the 14-alpha demethylation of obtusifoliol to 4 alpha-methyl-5 alpha-ergosta-8,14,24(28)-trien-3 beta-ol. This Arabidopsis thaliana (Mouse-ear cress) protein is Sterol 14-demethylase (CYP51G1).